A 488-amino-acid chain; its full sequence is Dipeptide and tripeptide permease A (488 aa).

Topologically, residues 1–35 (MSTANTPEDEQKPSLNAFKQPRAFYLIFSIELWER) are cytoplasmic. Residues 36–56 (FGYYGLQGIMAVYLVKMLGMS) form a helical membrane-spanning segment. Residues 57–60 (EAEA) lie on the Periplasmic side of the membrane. A helical transmembrane segment spans residues 61-81 (ITVFAAFTALVYGFVAIGGWL). Residues 82–90 (GDKILGTKR) are Cytoplasmic-facing. A helical transmembrane segment spans residues 91–111 (VIVLGAIVLAIGYAMVAFSDH). The Periplasmic segment spans residues 112–114 (DKD). The helical transmembrane segment at 115–135 (MIYWGLATIAVGNGLFKANPS) threads the bilayer. The Cytoplasmic segment spans residues 136-154 (SLLATCYEKDDPQLDGAFT). The helical transmembrane segment at 155-175 (MYYMSINVGSFLSMLATPWLA) threads the bilayer. At 176 to 179 (ANYG) the chain is on the periplasmic side. Residues 180 to 200 (WDVAFALSVVGMLITLANFML) form a helical membrane-spanning segment. The Cytoplasmic segment spans residues 201-219 (CRGWIKDKGSRPDFEPLNY). A helical membrane pass occupies residues 220–240 (LKLLLTLVGIVALTAVSTWLL). A topological domain (periplasmic) is located at residue His-241. The helical transmembrane segment at 242 to 262 (NNEVATWSLAIISLGIILIFA) threads the bilayer. At 263–275 (RETFMMKGVARRK) the chain is on the cytoplasmic side. Residues 276–296 (MIVAFLLMVEAVVFFVLYDQM) traverse the membrane as a helical segment. Topologically, residues 297–324 (PTSLNFFAIHNVEHAILGFSVEPEQFQS) are periplasmic. A helical membrane pass occupies residues 325–345 (LNPFWIMLASPLLAAIYNFMG). The Cytoplasmic segment spans residues 346-353 (DKLPMPYK). The helical transmembrane segment at 354 to 374 (FTVGMFLSATAFLVLPLGASM) threads the bilayer. The Periplasmic segment spans residues 375–391 (ANEAGIVSSWWLVASYG). Residues 392 to 412 (FQSIGELMISGLGLAMVAQLV) traverse the membrane as a helical segment. The Cytoplasmic segment spans residues 413-415 (PQR). A helical membrane pass occupies residues 416–436 (LMGFIMGAWFLTSAAAAIIAG). Over 437 to 460 (KVASLMAVPEDVQNAHASLEIYSS) the chain is Periplasmic. Residues 461 to 481 (VFLQIGIVTGVIALLMLFTAP) form a helical membrane-spanning segment. The Cytoplasmic segment spans residues 482-488 (MLSKMTQ).

It belongs to the major facilitator superfamily. Proton-dependent oligopeptide transporter (POT/PTR) (TC 2.A.17) family. DtpA subfamily.

It is found in the cell inner membrane. In terms of biological role, proton-dependent permease that transports di- and tripeptides. The protein is Dipeptide and tripeptide permease A of Proteus mirabilis (strain HI4320).